Consider the following 447-residue polypeptide: Cobyrinate a,c-diamide synthase (447 aa).

The GATase cobBQ-type domain maps to arginine 247–glutamine 435. The active-site Nucleophile is cysteine 329.

This sequence belongs to the CobB/CbiA family. Mg(2+) is required as a cofactor.

The catalysed reaction is cob(II)yrinate + 2 L-glutamine + 2 ATP + 2 H2O = cob(II)yrinate a,c diamide + 2 L-glutamate + 2 ADP + 2 phosphate + 2 H(+). The enzyme catalyses Ni-sirohydrochlorin + 2 L-glutamine + 2 ATP + 2 H2O = Ni-sirohydrochlorin a,c-diamide + 2 L-glutamate + 2 ADP + 2 phosphate + 2 H(+). The protein operates within cofactor biosynthesis; adenosylcobalamin biosynthesis; cob(II)yrinate a,c-diamide from sirohydrochlorin (anaerobic route): step 10/10. Its function is as follows. Catalyzes the ATP-dependent amidation of the two carboxylate groups at positions a and c of cobyrinate, using either L-glutamine or ammonia as the nitrogen source. Involved in the biosynthesis of the unique nickel-containing tetrapyrrole coenzyme F430, the prosthetic group of methyl-coenzyme M reductase (MCR), which plays a key role in methanogenesis and anaerobic methane oxidation. Catalyzes the ATP-dependent amidation of the two carboxylate groups at positions a and c of Ni-sirohydrochlorin, using L-glutamine or ammonia as the nitrogen source. The sequence is that of Cobyrinate a,c-diamide synthase from Methanothermobacter thermautotrophicus (strain ATCC 29096 / DSM 1053 / JCM 10044 / NBRC 100330 / Delta H) (Methanobacterium thermoautotrophicum).